A 376-amino-acid chain; its full sequence is UPF0754 membrane protein SSP0953 (376 aa).

Transmembrane regions (helical) follow at residues 4 to 24 (FLVIIFMMVIGALIGGVTNVI) and 356 to 376 (FLGFLLGGIIGLFQGVIAIFV).

Belongs to the UPF0754 family.

The protein resides in the cell membrane. This is UPF0754 membrane protein SSP0953 from Staphylococcus saprophyticus subsp. saprophyticus (strain ATCC 15305 / DSM 20229 / NCIMB 8711 / NCTC 7292 / S-41).